We begin with the raw amino-acid sequence, 476 residues long: Bifunctional protein HldE (476 aa).

A ribokinase region spans residues 1-318 (MLSKKPNILV…EYESSLHKSN (318 aa)). 195–198 (NKKE) provides a ligand contact to ATP. Asp-263 is an active-site residue. Residues 345 to 476 (FTNGCFDILH…RIQENEKCNN (132 aa)) form a cytidylyltransferase region.

The protein in the N-terminal section; belongs to the carbohydrate kinase PfkB family. In the C-terminal section; belongs to the cytidylyltransferase family. In terms of assembly, homodimer.

It catalyses the reaction D-glycero-beta-D-manno-heptose 7-phosphate + ATP = D-glycero-beta-D-manno-heptose 1,7-bisphosphate + ADP + H(+). It carries out the reaction D-glycero-beta-D-manno-heptose 1-phosphate + ATP + H(+) = ADP-D-glycero-beta-D-manno-heptose + diphosphate. It participates in nucleotide-sugar biosynthesis; ADP-L-glycero-beta-D-manno-heptose biosynthesis; ADP-L-glycero-beta-D-manno-heptose from D-glycero-beta-D-manno-heptose 7-phosphate: step 1/4. Its pathway is nucleotide-sugar biosynthesis; ADP-L-glycero-beta-D-manno-heptose biosynthesis; ADP-L-glycero-beta-D-manno-heptose from D-glycero-beta-D-manno-heptose 7-phosphate: step 3/4. Its function is as follows. Catalyzes the phosphorylation of D-glycero-D-manno-heptose 7-phosphate at the C-1 position to selectively form D-glycero-beta-D-manno-heptose-1,7-bisphosphate. Catalyzes the ADP transfer from ATP to D-glycero-beta-D-manno-heptose 1-phosphate, yielding ADP-D-glycero-beta-D-manno-heptose. This chain is Bifunctional protein HldE, found in Aliarcobacter butzleri (strain RM4018) (Arcobacter butzleri).